A 366-amino-acid polypeptide reads, in one-letter code: Protein sigma-NS (366 aa).

The interval 1-11 is important for ssRNA-binding and formation of complexes; the sequence is MASSLRAAISK.

It belongs to the orthoreovirus sigma-NS protein family. Homooligomer; in presence of RNA. Interacts with protein mu-NS; this interaction allows the localization of sigma-NS to the viral factories. Interacts with host G3BP1 (via C-terminus); this interaction induces the relocalization of G3BP1 and other SG proteins to the viral factories periphery.

The protein localises to the host cytoplasm. Protein that binds to ssRNA and participates with protein mu-NS in forming the matrix of viral factories, which are large inclusions in the host cytoplasm where replication intermediates are assembled and viral RNA replication takes place. Plays a role in the inhibition of the integrated stress response (ISR) to escape from host cell translational shutoff. Participates in the disruption of stress granules (SG) through its association with host G3BP1 and mu-NS. This is Protein sigma-NS (S3) from Mammalia (T3D).